The primary structure comprises 397 residues: Acetate kinase (397 aa).

A Mg(2+)-binding site is contributed by Asn-7. An ATP-binding site is contributed by Lys-14. Arg-90 contacts substrate. Asp-147 functions as the Proton donor/acceptor in the catalytic mechanism. Residues His-207–Gly-211, Asp-282–Arg-284, and Gly-330–Asn-334 contribute to the ATP site. Position 383 (Glu-383) interacts with Mg(2+).

Belongs to the acetokinase family. In terms of assembly, homodimer. Mg(2+) serves as cofactor. It depends on Mn(2+) as a cofactor.

It localises to the cytoplasm. It carries out the reaction acetate + ATP = acetyl phosphate + ADP. It participates in metabolic intermediate biosynthesis; acetyl-CoA biosynthesis; acetyl-CoA from acetate: step 1/2. Its function is as follows. Catalyzes the formation of acetyl phosphate from acetate and ATP. Can also catalyze the reverse reaction. This is Acetate kinase from Clostridium botulinum (strain Loch Maree / Type A3).